Here is a 306-residue protein sequence, read N- to C-terminus: MRILYLGTPEIAVAPLELLHASGHEIVGVVTQPDRPAGRKNVLTAPPVKLAAERLGIPVFQPETLKDPAAVARLRAFEPEVGVVAAYGEILRKQVLAIPALGYLNIHPSILPLYRGPAPVTGAILAGDDLVGVSIIKLTAKMDAGPILGQMVMPLANDARAGEWTAQLMRQGGELLAQVLPAYAAGQIQAQIQDDSQASYTQMISKNDGLINWNLPALVIERMTRAYDPWPGTAVKLNDQPFKILRAKAHTSWSGTIQPGTLFEQQGQILVATGSGALELLEVQPAGKRPMAANDWRRGAKDIEQL.

A (6S)-5,6,7,8-tetrahydrofolate-binding site is contributed by 109–112; the sequence is SILP.

This sequence belongs to the Fmt family.

It carries out the reaction L-methionyl-tRNA(fMet) + (6R)-10-formyltetrahydrofolate = N-formyl-L-methionyl-tRNA(fMet) + (6S)-5,6,7,8-tetrahydrofolate + H(+). Its function is as follows. Attaches a formyl group to the free amino group of methionyl-tRNA(fMet). The formyl group appears to play a dual role in the initiator identity of N-formylmethionyl-tRNA by promoting its recognition by IF2 and preventing the misappropriation of this tRNA by the elongation apparatus. In Herpetosiphon aurantiacus (strain ATCC 23779 / DSM 785 / 114-95), this protein is Methionyl-tRNA formyltransferase.